Reading from the N-terminus, the 105-residue chain is Small ribosomal subunit protein uS10c (105 aa).

It belongs to the universal ribosomal protein uS10 family. Part of the 30S ribosomal subunit.

It localises to the plastid. It is found in the chloroplast. In terms of biological role, involved in the binding of tRNA to the ribosomes. The protein is Small ribosomal subunit protein uS10c of Porphyra purpurea (Red seaweed).